Reading from the N-terminus, the 452-residue chain is Tubulin alpha-1 chain (452 aa).

Gln-11 lines the GTP pocket. Position 40 is an N6-acetyllysine (Lys-40). GTP-binding residues include Glu-71, Ser-140, Gly-144, Thr-145, Thr-179, Asn-206, and Asn-228. Glu-71 contacts Mg(2+). The active site involves Glu-254. A disordered region spans residues 433-452; it reads EEVGVDSADAEGEEEEGDEY.

The protein belongs to the tubulin family. Dimer of alpha and beta chains. A typical microtubule is a hollow water-filled tube with an outer diameter of 25 nm and an inner diameter of 15 nM. Alpha-beta heterodimers associate head-to-tail to form protofilaments running lengthwise along the microtubule wall with the beta-tubulin subunit facing the microtubule plus end conferring a structural polarity. Microtubules usually have 13 protofilaments but different protofilament numbers can be found in some organisms and specialized cells. Mg(2+) is required as a cofactor. In terms of processing, undergoes a tyrosination/detyrosination cycle, the cyclic removal and re-addition of a C-terminal tyrosine residue by the enzymes tubulin tyrosine carboxypeptidase (TTCP) and tubulin tyrosine ligase (TTL), respectively. Acetylation of alpha chains at Lys-40 stabilizes microtubules and affects affinity and processivity of microtubule motors. This modification has a role in multiple cellular functions, ranging from cell motility, cell cycle progression or cell differentiation to intracellular trafficking and signaling.

It localises to the cytoplasm. The protein resides in the cytoskeleton. It carries out the reaction GTP + H2O = GDP + phosphate + H(+). In terms of biological role, tubulin is the major constituent of microtubules, a cylinder consisting of laterally associated linear protofilaments composed of alpha- and beta-tubulin heterodimers. Microtubules grow by the addition of GTP-tubulin dimers to the microtubule end, where a stabilizing cap forms. Below the cap, tubulin dimers are in GDP-bound state, owing to GTPase activity of alpha-tubulin. The chain is Tubulin alpha-1 chain from Paracentrotus lividus (Common sea urchin).